The sequence spans 362 residues: Cobalt-precorrin-5B C(1)-methyltransferase (362 aa).

This sequence belongs to the CbiD family.

It catalyses the reaction Co-precorrin-5B + S-adenosyl-L-methionine = Co-precorrin-6A + S-adenosyl-L-homocysteine. Its pathway is cofactor biosynthesis; adenosylcobalamin biosynthesis; cob(II)yrinate a,c-diamide from sirohydrochlorin (anaerobic route): step 6/10. Its function is as follows. Catalyzes the methylation of C-1 in cobalt-precorrin-5B to form cobalt-precorrin-6A. This chain is Cobalt-precorrin-5B C(1)-methyltransferase, found in Burkholderia thailandensis (strain ATCC 700388 / DSM 13276 / CCUG 48851 / CIP 106301 / E264).